The primary structure comprises 503 residues: ATP-dependent RNA helicase dbp3 (503 aa).

A compositionally biased stretch (basic and acidic residues) spans 1-13; sequence MGKRVSHNEGADR. Positions 1 to 37 are disordered; sequence MGKRVSHNEGADRRPKKKAKNEKPEKETMESPAADVT. Positions 104–112 match the Q motif motif; it reads SFASPTPIQ. Residues 116 to 292 form the Helicase ATP-binding domain; sequence WPLLFAGRDV…ATFMTSAVTV (177 aa). 129-136 provides a ligand contact to ATP; sequence AETGSGKT. Residues 239 to 242 carry the DEAD box motif; the sequence is DEAD. Residues 323–472 enclose the Helicase C-terminal domain; sequence RLVQLLSENQ…EVPQELLKFG (150 aa).

This sequence belongs to the DEAD box helicase family. DDX5/DBP2 subfamily.

It localises to the nucleus. It is found in the nucleolus. The catalysed reaction is ATP + H2O = ADP + phosphate + H(+). ATP-dependent RNA helicase required for 60S ribosomal subunit synthesis. Involved in efficient pre-rRNA processing, predominantly at site A3, which is necessary for the normal formation of 25S and 5.8S rRNAs. The polypeptide is ATP-dependent RNA helicase dbp3 (dbp3) (Aspergillus clavatus (strain ATCC 1007 / CBS 513.65 / DSM 816 / NCTC 3887 / NRRL 1 / QM 1276 / 107)).